Consider the following 247-residue polypeptide: Probable transcriptional regulatory protein Dalk_2958 (247 aa).

It belongs to the TACO1 family.

The protein localises to the cytoplasm. This is Probable transcriptional regulatory protein Dalk_2958 from Desulfatibacillum aliphaticivorans.